Here is a 210-residue protein sequence, read N- to C-terminus: Ribosomal RNA small subunit methyltransferase G (210 aa).

S-adenosyl-L-methionine contacts are provided by residues Gly-77, Phe-82, 100–102 (ERS), 128–129 (VE), and Arg-141.

The protein belongs to the methyltransferase superfamily. RNA methyltransferase RsmG family.

The protein resides in the cytoplasm. Functionally, specifically methylates the N7 position of a guanine in 16S rRNA. This Borrelia recurrentis (strain A1) protein is Ribosomal RNA small subunit methyltransferase G.